Here is an 882-residue protein sequence, read N- to C-terminus: Ubiquitin carboxyl-terminal hydrolase 4 (882 aa).

Residues 182 to 308 (YDSSLLLIDV…WVSKKGACET (127 aa)) enclose the Rhodanese domain. Low complexity predominate over residues 382-399 (KAKSSSTSSVTSSSPAPS). The interval 382-411 (KAKSSSTSSVTSSSPAPSQLVRPQTSSMPP) is disordered. Positions 402 to 411 (VRPQTSSMPP) are enriched in polar residues. The 361-residue stretch at 519–879 (VGLENMGNSC…NAYVLFYHRV (361 aa)) folds into the USP domain. Cys-528 serves as the catalytic Nucleophile. Residue His-836 is the Proton acceptor of the active site.

It belongs to the peptidase C19 family.

The protein resides in the cytoplasm. Its subcellular location is the late endosome membrane. It catalyses the reaction Thiol-dependent hydrolysis of ester, thioester, amide, peptide and isopeptide bonds formed by the C-terminal Gly of ubiquitin (a 76-residue protein attached to proteins as an intracellular targeting signal).. RFU1 is an inhibitor of deubiquitination activity. Functionally, ubiquitin thioesterase that acts at the late endosome/prevacuolar compartment to recover ubiquitin from ubiquitinated membrane proteins en route to the vacuole. Also removes ubiquitin from soluble proteins targeted to proteasomes. Is essential to maintain a normal level of free ubiquitin. Required for promoting coordination of DNA replication and avoids DNA overreplication. This is Ubiquitin carboxyl-terminal hydrolase 4 (DOA4) from Vanderwaltozyma polyspora (strain ATCC 22028 / DSM 70294 / BCRC 21397 / CBS 2163 / NBRC 10782 / NRRL Y-8283 / UCD 57-17) (Kluyveromyces polysporus).